The chain runs to 75 residues: U6-lycotoxin-Ls1d (75 aa).

The signal sequence occupies residues 1-21 (MKLLLFTALVLVVISLVEVEA). A propeptide spanning residues 22–25 (ENER) is cleaved from the precursor.

The protein belongs to the neurotoxin 19 (CSTX) family. 06 (U6-Lctx) subfamily. In terms of processing, contains 4 disulfide bonds. As to expression, expressed by the venom gland.

It localises to the secreted. This is U6-lycotoxin-Ls1d from Lycosa singoriensis (Wolf spider).